Here is a 75-residue protein sequence, read N- to C-terminus: Dermaseptin-SP4 (75 aa).

A signal peptide spans 1 to 22 (MAFLKKSLFLVLFLGLVSLSMC). The propeptide occupies 23 to 45 (EEEKRENEVEEEQEDDEQSELRR). P72 carries the post-translational modification Proline amide. The propeptide occupies 74–75 (EQ).

It belongs to the frog skin active peptide (FSAP) family. Dermaseptin subfamily. Expressed by the skin glands.

It is found in the secreted. Its subcellular location is the target cell membrane. Its function is as follows. Antimicrobial peptide with activity against Gram-positive and Gram-negative bacteria and fungi. Has been tested against E.coli (MIC=47.25-128 uM), S.aureus (MIC=189-512 uM), K.pneumoniae (MIC=189 uM) and C.albicans (MIC&gt;189 uM). Probably acts by disturbing membrane functions with its alpha-helical amphipathic structure. May penetrate bacterial membranes, but stay at the mammalian membrane surface. Shows a weak hemolytic activity. This Agalychnis spurrelli (Gliding leaf frog) protein is Dermaseptin-SP4.